The sequence spans 692 residues: Elongation factor G (692 aa).

A tr-type G domain is found at 8 to 282 (EKTRNIGIMA…AVIDYLPSPL (275 aa)). GTP contacts are provided by residues 17–24 (AHVDAGKT), 81–85 (DTPGH), and 135–138 (NKMD).

This sequence belongs to the TRAFAC class translation factor GTPase superfamily. Classic translation factor GTPase family. EF-G/EF-2 subfamily.

It localises to the cytoplasm. Functionally, catalyzes the GTP-dependent ribosomal translocation step during translation elongation. During this step, the ribosome changes from the pre-translocational (PRE) to the post-translocational (POST) state as the newly formed A-site-bound peptidyl-tRNA and P-site-bound deacylated tRNA move to the P and E sites, respectively. Catalyzes the coordinated movement of the two tRNA molecules, the mRNA and conformational changes in the ribosome. This Streptococcus agalactiae serotype III (strain NEM316) protein is Elongation factor G.